We begin with the raw amino-acid sequence, 359 residues long: MCNILNKIKPGVITGNEALKLFKIAKKNHFAIPAINCINTDSINIVLETAKKAKSPVIIQFSYGGSNFISGPGLTTNILHKKAIIGALSGANHVHIMAKHYNVPVILHTDHCNKNMLPWIDELINVGTKHFKTYNKPLFTSHMIDLSNEKLDYNINICSKYLEKMRKINMLLEIELGCTGGEEDGINNTKINKSLLYTQPNEVNYAYERLSSVGPEFIIAASFGNVHGVYKSGNVRLTPDILKKSQNYVSKKHNLSCNPLCFVFHGGSGSSEKDIKKSIKYGVIKMNIDTDIQWATWQGILNFYNKNNKYLHNQIGNLDNENKPNKKYYDPRTWIRSSQISVSNHLTKIFRILNSCNTL.

S62 contacts D-glyceraldehyde 3-phosphate. D110 (proton donor) is an active-site residue. The Zn(2+) site is built by H111, D145, E175, and H227. G228 is a dihydroxyacetone phosphate binding site. H265 is a Zn(2+) binding site. Residues 266 to 268 and 287 to 290 each bind dihydroxyacetone phosphate; these read GGS and NIDT.

This sequence belongs to the class II fructose-bisphosphate aldolase family. Zn(2+) serves as cofactor.

The enzyme catalyses beta-D-fructose 1,6-bisphosphate = D-glyceraldehyde 3-phosphate + dihydroxyacetone phosphate. It participates in carbohydrate degradation; glycolysis; D-glyceraldehyde 3-phosphate and glycerone phosphate from D-glucose: step 4/4. Functionally, catalyzes the aldol condensation of dihydroxyacetone phosphate (DHAP or glycerone-phosphate) with glyceraldehyde 3-phosphate (G3P) to form fructose 1,6-bisphosphate (FBP) in gluconeogenesis and the reverse reaction in glycolysis. The sequence is that of Fructose-bisphosphate aldolase class 2 (fbaA) from Buchnera aphidicola subsp. Baizongia pistaciae (strain Bp).